The chain runs to 197 residues: Transcription factor FapR (197 aa).

The protein belongs to the FapR family.

Transcriptional factor involved in regulation of membrane lipid biosynthesis by repressing genes involved in fatty acid and phospholipid metabolism. This is Transcription factor FapR from Bacillus anthracis (strain A0248).